Reading from the N-terminus, the 1823-residue chain is THO complex subunit 2 (1823 aa).

Residues 935–1003 (NRYESEISKQ…RRRLSREKDT (69 aa)) adopt a coiled-coil conformation. The short motif at 964–969 (KRKKEK) is the Nuclear localization signal element. Disordered regions lie at residues 1244-1382 (LVGV…KDLN) and 1394-1823 (ALSS…GSRE). 3 stretches are compositionally biased toward basic and acidic residues: residues 1272–1283 (QMLKTKPLDGRT), 1312–1330 (KSME…DENP), and 1356–1367 (AKQDFGKDDGKS). Positions 1394–1409 (ALSSTAANGSIATGSS) are enriched in polar residues. The segment covering 1432–1596 (PRHEIVTSVR…EKSHPDDHFH (165 aa)) has biased composition (basic and acidic residues). The segment covering 1600-1610 (LPPPPPLPPNI) has biased composition (pro residues). Composition is skewed to basic and acidic residues over residues 1616–1625 (AAKEDLERRA), 1636–1648 (PRHE…RSEE), 1655–1706 (DDAK…FEAS), and 1768–1785 (LGKE…DPIA). Ser1646 and Ser1696 each carry phosphoserine. Positions 1802–1816 (MTVNGKTTRGEQSGS) are enriched in polar residues.

Belongs to the THOC2 family. In terms of assembly, component of the THO complex, which is composed of THO1, THO2, THO3, THO5, THO6 and THO7.

It localises to the nucleus. Acts as a component of the THO subcomplex of the TREX complex which is thought to couple mRNA transcription, processing and nuclear export. This is THO complex subunit 2 (THO2) from Arabidopsis thaliana (Mouse-ear cress).